A 218-amino-acid polypeptide reads, in one-letter code: Probable transaldolase (218 aa).

The active-site Schiff-base intermediate with substrate is the Lys87.

The protein belongs to the transaldolase family. Type 3B subfamily.

It is found in the cytoplasm. The catalysed reaction is D-sedoheptulose 7-phosphate + D-glyceraldehyde 3-phosphate = D-erythrose 4-phosphate + beta-D-fructose 6-phosphate. Its pathway is carbohydrate degradation; pentose phosphate pathway; D-glyceraldehyde 3-phosphate and beta-D-fructose 6-phosphate from D-ribose 5-phosphate and D-xylulose 5-phosphate (non-oxidative stage): step 2/3. Its function is as follows. Transaldolase is important for the balance of metabolites in the pentose-phosphate pathway. The chain is Probable transaldolase from Phocaeicola vulgatus (strain ATCC 8482 / DSM 1447 / JCM 5826 / CCUG 4940 / NBRC 14291 / NCTC 11154) (Bacteroides vulgatus).